Consider the following 208-residue polypeptide: Attacin-A (208 aa).

The N-terminal stretch at 1-20 (MQSFKICFFISCLSVVLVKG) is a signal peptide. The propeptide occupies 21-47 (QFGGTVSSNPNGGLDVNARLSKTIGDP).

As to expression, hemolymph and fat body.

It localises to the secreted. Its function is as follows. Hemolymph antibacterial protein against Gram-negative bacteria. In Glossina morsitans morsitans (Savannah tsetse fly), this protein is Attacin-A.